A 163-amino-acid polypeptide reads, in one-letter code: Transcriptional repressor NrdR (163 aa).

A zinc finger spans residues 3–34 (CPFCAHPEDKVVDSRESKEGESIRRRRECLKC). One can recognise an ATP-cone domain in the interval 49 to 139 (YMVVKKDGRR…VYLDFKDVRE (91 aa)).

It belongs to the NrdR family. Zn(2+) is required as a cofactor.

In terms of biological role, negatively regulates transcription of bacterial ribonucleotide reductase nrd genes and operons by binding to NrdR-boxes. This chain is Transcriptional repressor NrdR, found in Koribacter versatilis (strain Ellin345).